Reading from the N-terminus, the 490-residue chain is Phosphoglucosamine mutase (490 aa).

Ser139 (phosphoserine intermediate) is an active-site residue. The Mg(2+) site is built by Ser139, Asp279, Asp281, and Asp283. The residue at position 139 (Ser139) is a Phosphoserine.

The protein belongs to the phosphohexose mutase family. It depends on Mg(2+) as a cofactor. In terms of processing, activated by phosphorylation.

The enzyme catalyses alpha-D-glucosamine 1-phosphate = D-glucosamine 6-phosphate. Its function is as follows. Catalyzes the conversion of glucosamine-6-phosphate to glucosamine-1-phosphate. This chain is Phosphoglucosamine mutase, found in Nostoc punctiforme (strain ATCC 29133 / PCC 73102).